The chain runs to 180 residues: Large ribosomal subunit protein uL5 (180 aa).

Belongs to the universal ribosomal protein uL5 family. In terms of assembly, part of the 50S ribosomal subunit; part of the 5S rRNA/L5/L18/L25 subcomplex. Contacts the 5S rRNA and the P site tRNA. Forms a bridge to the 30S subunit in the 70S ribosome.

This is one of the proteins that bind and probably mediate the attachment of the 5S RNA into the large ribosomal subunit, where it forms part of the central protuberance. In the 70S ribosome it contacts protein S13 of the 30S subunit (bridge B1b), connecting the 2 subunits; this bridge is implicated in subunit movement. Contacts the P site tRNA; the 5S rRNA and some of its associated proteins might help stabilize positioning of ribosome-bound tRNAs. This Oenococcus oeni (strain ATCC BAA-331 / PSU-1) protein is Large ribosomal subunit protein uL5.